The following is a 211-amino-acid chain: tRNA (guanine-N(7)-)-methyltransferase (211 aa).

Positions 44, 69, 96, and 118 each coordinate S-adenosyl-L-methionine. Residue Asp118 is part of the active site. Residue Lys122 participates in substrate binding. The interaction with RNA stretch occupies residues 124–129 (KHEKRR). Substrate contacts are provided by residues Asp154 and 191–194 (TEYE).

It belongs to the class I-like SAM-binding methyltransferase superfamily. TrmB family.

The enzyme catalyses guanosine(46) in tRNA + S-adenosyl-L-methionine = N(7)-methylguanosine(46) in tRNA + S-adenosyl-L-homocysteine. Its pathway is tRNA modification; N(7)-methylguanine-tRNA biosynthesis. Catalyzes the formation of N(7)-methylguanine at position 46 (m7G46) in tRNA. In Streptococcus agalactiae serotype Ia (strain ATCC 27591 / A909 / CDC SS700), this protein is tRNA (guanine-N(7)-)-methyltransferase.